A 90-amino-acid polypeptide reads, in one-letter code: Small ribosomal subunit protein bS16 (90 aa).

It belongs to the bacterial ribosomal protein bS16 family.

This chain is Small ribosomal subunit protein bS16, found in Lactobacillus delbrueckii subsp. bulgaricus (strain ATCC 11842 / DSM 20081 / BCRC 10696 / JCM 1002 / NBRC 13953 / NCIMB 11778 / NCTC 12712 / WDCM 00102 / Lb 14).